The primary structure comprises 260 residues: MDSPLSDGSRPPQQQNLHPLADYQFSAEEVKALRECNTESFLQRSLPFGTGLGLLAYFGVKNGYLQGNGKYGAVPKVVMGVILGYFVGKFSYQQKCAEKIMRLPNSRLGEVLRQRRQGGGVINTISPDESLTRAFTLAPFSPSSADVYTDEGLNPSRSTALNLDTESRPTLAGLDDIYRPSLDSSGQMMDTELPLEPAKPGQTYEDLRKKNREGYATHQQSPYSKPYEPQAPVRQRLVEPAPEAATGRPNKNKYGDSWQD.

In terms of domain architecture, OCIA spans 1–110; it reads MDSPLSDGSR…MRLPNSRLGE (110 aa). Positions 146–260 are disordered; the sequence is DVYTDEGLNP…KNKYGDSWQD (115 aa). Over residues 155 to 164 the composition is skewed to polar residues; the sequence is PSRSTALNLD. Basic and acidic residues predominate over residues 205–215; sequence EDLRKKNREGY.

The protein belongs to the OCIAD1 family.

The sequence is that of OCIA domain-containing protein 1 from Drosophila pseudoobscura pseudoobscura (Fruit fly).